A 243-amino-acid polypeptide reads, in one-letter code: Segregation and condensation protein A (243 aa).

This sequence belongs to the ScpA family. Component of a cohesin-like complex composed of ScpA, ScpB and the Smc homodimer, in which ScpA and ScpB bind to the head domain of Smc. The presence of the three proteins is required for the association of the complex with DNA.

It localises to the cytoplasm. In terms of biological role, participates in chromosomal partition during cell division. May act via the formation of a condensin-like complex containing Smc and ScpB that pull DNA away from mid-cell into both cell halves. The polypeptide is Segregation and condensation protein A (Staphylococcus haemolyticus (strain JCSC1435)).